A 279-amino-acid chain; its full sequence is MDTELLKTFLEVSRTRHFGRAAESLYLTQSAVSFRIRQLENQLGVNLFTRHRNNIRLTAAGEKLLPYAETLMSTWQAARKEVAHTSRHNEFSIGASASLWECMLNQWLGRLYQNQDVHTGLQFEARIAQRQSLVKQLHERQLDLLITTEAPKMDEFCSQLLGYFTLALYTSAPSKLKGDLNYLRLEWGPDFQQHEAGLIGADEVPILTTSSAELAQQQIAMLNGCTWLPVSWARKKGGLHTVVDSTTLSRPLYAIWLQNSDKNALIRDLLKINVLDEVY.

The region spanning 1–58 (MDTELLKTFLEVSRTRHFGRAAESLYLTQSAVSFRIRQLENQLGVNLFTRHRNNIRLT) is the HTH lysR-type domain. The segment at residues 18–37 (FGRAAESLYLTQSAVSFRIR) is a DNA-binding region (H-T-H motif).

This sequence belongs to the LysR transcriptional regulatory family.

In terms of biological role, negatively regulates the transcription of the flagellar master operon flhDC by binding to the upstream region of the operon. The polypeptide is HTH-type transcriptional regulator HdfR (Escherichia coli O6:K15:H31 (strain 536 / UPEC)).